Here is a 66-residue protein sequence, read N- to C-terminus: Large ribosomal subunit protein bL31 (66 aa).

Residues Cys16, Cys18, Cys36, and Cys39 each coordinate Zn(2+).

It belongs to the bacterial ribosomal protein bL31 family. Type A subfamily. Part of the 50S ribosomal subunit. Requires Zn(2+) as cofactor.

Its function is as follows. Binds the 23S rRNA. The protein is Large ribosomal subunit protein bL31 of Desulforamulus reducens (strain ATCC BAA-1160 / DSM 100696 / MI-1) (Desulfotomaculum reducens).